The following is a 470-amino-acid chain: Ribulose bisphosphate carboxylase large chain (470 aa).

Residues N115 and T165 each coordinate substrate. Catalysis depends on K167, which acts as the Proton acceptor. A substrate-binding site is contributed by K169. Mg(2+)-binding residues include K193, D195, and E196. An N6-carboxylysine modification is found at K193. The active-site Proton acceptor is the H286. Substrate is bound by residues R287, H319, and S371.

This sequence belongs to the RuBisCO large chain family. Type I subfamily. Heterohexadecamer of 8 large chains and 8 small chains. It depends on Mg(2+) as a cofactor.

It is found in the carboxysome. The catalysed reaction is 2 (2R)-3-phosphoglycerate + 2 H(+) = D-ribulose 1,5-bisphosphate + CO2 + H2O. It catalyses the reaction D-ribulose 1,5-bisphosphate + O2 = 2-phosphoglycolate + (2R)-3-phosphoglycerate + 2 H(+). Its function is as follows. RuBisCO catalyzes two reactions: the carboxylation of D-ribulose 1,5-bisphosphate, the primary event in carbon dioxide fixation, as well as the oxidative fragmentation of the pentose substrate in the photorespiration process. Both reactions occur simultaneously and in competition at the same active site. This Synechococcus sp. (strain CC9902) protein is Ribulose bisphosphate carboxylase large chain.